Consider the following 174-residue polypeptide: NADH-ubiquinone oxidoreductase chain 6 (174 aa).

Helical transmembrane passes span 24 to 44 (LALG…TGLM), 53 to 73 (ILFL…TSLA), 82 to 102 (MKLT…SFIM), and 143 to 163 (FITI…VKIT).

This sequence belongs to the complex I subunit 6 family.

The protein resides in the mitochondrion membrane. It carries out the reaction a ubiquinone + NADH + 5 H(+)(in) = a ubiquinol + NAD(+) + 4 H(+)(out). Core subunit of the mitochondrial membrane respiratory chain NADH dehydrogenase (Complex I) that is believed to belong to the minimal assembly required for catalysis. Complex I functions in the transfer of electrons from NADH to the respiratory chain. The immediate electron acceptor for the enzyme is believed to be ubiquinone. This Drosophila melanogaster (Fruit fly) protein is NADH-ubiquinone oxidoreductase chain 6 (mt:ND6).